Reading from the N-terminus, the 392-residue chain is NADH-quinone oxidoreductase subunit D (392 aa).

This sequence belongs to the complex I 49 kDa subunit family. As to quaternary structure, NDH-1 is composed of 14 different subunits. Subunits NuoB, C, D, E, F, and G constitute the peripheral sector of the complex.

It is found in the cell inner membrane. It catalyses the reaction a quinone + NADH + 5 H(+)(in) = a quinol + NAD(+) + 4 H(+)(out). NDH-1 shuttles electrons from NADH, via FMN and iron-sulfur (Fe-S) centers, to quinones in the respiratory chain. The immediate electron acceptor for the enzyme in this species is believed to be ubiquinone. Couples the redox reaction to proton translocation (for every two electrons transferred, four hydrogen ions are translocated across the cytoplasmic membrane), and thus conserves the redox energy in a proton gradient. In Rhodospirillum rubrum (strain ATCC 11170 / ATH 1.1.1 / DSM 467 / LMG 4362 / NCIMB 8255 / S1), this protein is NADH-quinone oxidoreductase subunit D.